Consider the following 322-residue polypeptide: uncharacterized protein (322 aa).

5 helical membrane passes run 159–179 (GIIFCIVSILYCIINIRMLYL), 203–223 (MNIPALGAWGSVVAITFYIWL), 234–254 (GGILTMTAFLLSAIAAIRVGL), 267–287 (FEGSSAVVIAIILGALPLIPY), and 296–316 (TLLSGYLSIVISMIINSFFAW).

The protein resides in the membrane. This is an uncharacterized protein from Dictyostelium discoideum (Social amoeba).